The primary structure comprises 529 residues: Bifunctional purine biosynthesis protein PurH (529 aa).

The MGS-like domain occupies 1–148; it reads MQQRRPVRRA…KNHKDVAIVV (148 aa).

The protein belongs to the PurH family.

The enzyme catalyses (6R)-10-formyltetrahydrofolate + 5-amino-1-(5-phospho-beta-D-ribosyl)imidazole-4-carboxamide = 5-formamido-1-(5-phospho-D-ribosyl)imidazole-4-carboxamide + (6S)-5,6,7,8-tetrahydrofolate. It catalyses the reaction IMP + H2O = 5-formamido-1-(5-phospho-D-ribosyl)imidazole-4-carboxamide. It participates in purine metabolism; IMP biosynthesis via de novo pathway; 5-formamido-1-(5-phospho-D-ribosyl)imidazole-4-carboxamide from 5-amino-1-(5-phospho-D-ribosyl)imidazole-4-carboxamide (10-formyl THF route): step 1/1. Its pathway is purine metabolism; IMP biosynthesis via de novo pathway; IMP from 5-formamido-1-(5-phospho-D-ribosyl)imidazole-4-carboxamide: step 1/1. The chain is Bifunctional purine biosynthesis protein PurH from Klebsiella pneumoniae (strain 342).